We begin with the raw amino-acid sequence, 161 residues long: RNA pyrophosphohydrolase (161 aa).

Residues P12–K154 form the Nudix hydrolase domain. A Nudix box motif is present at residues G46–G67.

The protein belongs to the Nudix hydrolase family. RppH subfamily. A divalent metal cation serves as cofactor.

In terms of biological role, accelerates the degradation of transcripts by removing pyrophosphate from the 5'-end of triphosphorylated RNA, leading to a more labile monophosphorylated state that can stimulate subsequent ribonuclease cleavage. The protein is RNA pyrophosphohydrolase of Rickettsia canadensis (strain McKiel).